The chain runs to 224 residues: PKHD-type hydroxylase HNE_1625 (224 aa).

In terms of domain architecture, Fe2OG dioxygenase spans Lys-77–Ser-175. Residues His-95, Asp-97, and His-156 each coordinate Fe cation. Position 166 (Arg-166) interacts with 2-oxoglutarate.

Fe(2+) serves as cofactor. L-ascorbate is required as a cofactor.

The polypeptide is PKHD-type hydroxylase HNE_1625 (Hyphomonas neptunium (strain ATCC 15444)).